The following is a 383-amino-acid chain: 3-phytase (383 aa).

The signal sequence occupies residues 1–26 (MNHSKTLLLTAAAGLMLTCGAVSSQA). A propeptide spanning residues 27–29 (KHK) is cleaved from the precursor. Residues 30 to 362 (LSDPYHFTVN…VPWERIADQI (333 aa)) form the BPP domain.

The cofactor is Ca(2+).

The protein localises to the secreted. It carries out the reaction 1D-myo-inositol hexakisphosphate + H2O = 1D-myo-inositol 1,2,4,5,6-pentakisphosphate + phosphate. In terms of biological role, catalyzes the hydrolysis of inorganic orthophosphate from phytate. Only phytate, ADP, and ATP were hydrolyzed (100, 75, and 50% of the relative activity, respectively). This Bacillus subtilis protein is 3-phytase (phyC).